Consider the following 409-residue polypeptide: Phosphatidylserine decarboxylase proenzyme, mitochondrial (409 aa).

Residues 1 to 52 constitute a mitochondrion transit peptide; the sequence is MATSVGHRCLGLLHGVAPWRSSLHPCEITALSQSLQPLRKLPFRAFRTDARK. Over 53–63 the chain is Mitochondrial matrix; it reads IHTAPARTMFL. The helical transmembrane segment at 64–82 threads the bilayer; that stretch reads LRPVPILLATGGGYAGYRQ. At 83-409 the chain is on the mitochondrial intermembrane side; sequence YEKYRERELE…IRFGEALGSL (327 aa). Active-site charge relay system; for autoendoproteolytic cleavage activity residues include Asp191, His267, and Ser378. Residue Ser378 is the Schiff-base intermediate with substrate; via pyruvic acid; for decarboxylase activity of the active site. Pyruvic acid (Ser); by autocatalysis is present on Ser378.

The protein belongs to the phosphatidylserine decarboxylase family. PSD-B subfamily. Eukaryotic type I sub-subfamily. As to quaternary structure, heterodimer of a large membrane-associated beta subunit and a small pyruvoyl-containing alpha subunit. Requires pyruvate as cofactor. Post-translationally, is synthesized initially as an inactive proenzyme. Formation of the active enzyme involves a self-maturation process in which the active site pyruvoyl group is generated from an internal serine residue via an autocatalytic post-translational modification. Two non-identical subunits are generated from the proenzyme in this reaction, and the pyruvate is formed at the N-terminus of the alpha chain, which is derived from the carboxyl end of the proenzyme. The autoendoproteolytic cleavage occurs by a canonical serine protease mechanism, in which the side chain hydroxyl group of the serine supplies its oxygen atom to form the C-terminus of the beta chain, while the remainder of the serine residue undergoes an oxidative deamination to produce ammonia and the pyruvoyl prosthetic group on the alpha chain. During this reaction, the Ser that is part of the protease active site of the proenzyme becomes the pyruvoyl prosthetic group, which constitutes an essential element of the active site of the mature decarboxylase.

It is found in the mitochondrion inner membrane. The protein resides in the lipid droplet. The protein localises to the cytoplasm. The enzyme catalyses a 1,2-diacyl-sn-glycero-3-phospho-L-serine + H(+) = a 1,2-diacyl-sn-glycero-3-phosphoethanolamine + CO2. It participates in phospholipid metabolism; phosphatidylethanolamine biosynthesis. Catalyzes the formation of phosphatidylethanolamine (PtdEtn) from phosphatidylserine (PtdSer). Plays a central role in phospholipid metabolism and in the interorganelle trafficking of phosphatidylserine. May be involved in lipid droplet biogenesis at the endoplasmic reticulum membrane. The chain is Phosphatidylserine decarboxylase proenzyme, mitochondrial from Pongo abelii (Sumatran orangutan).